A 508-amino-acid polypeptide reads, in one-letter code: Probable glycine dehydrogenase (decarboxylating) subunit 2 (508 aa).

At lysine 277 the chain carries N6-(pyridoxal phosphate)lysine.

It belongs to the GcvP family. C-terminal subunit subfamily. As to quaternary structure, the glycine cleavage system is composed of four proteins: P, T, L and H. In this organism, the P 'protein' is a heterodimer of two subunits. It depends on pyridoxal 5'-phosphate as a cofactor.

It carries out the reaction N(6)-[(R)-lipoyl]-L-lysyl-[glycine-cleavage complex H protein] + glycine + H(+) = N(6)-[(R)-S(8)-aminomethyldihydrolipoyl]-L-lysyl-[glycine-cleavage complex H protein] + CO2. The glycine cleavage system catalyzes the degradation of glycine. The P protein binds the alpha-amino group of glycine through its pyridoxal phosphate cofactor; CO(2) is released and the remaining methylamine moiety is then transferred to the lipoamide cofactor of the H protein. The protein is Probable glycine dehydrogenase (decarboxylating) subunit 2 of Saccharolobus solfataricus (strain ATCC 35092 / DSM 1617 / JCM 11322 / P2) (Sulfolobus solfataricus).